A 422-amino-acid polypeptide reads, in one-letter code: Ubiquitin-conjugating enzyme E2 Q1 (422 aa).

Position 1 is an N-acetylmethionine (Met1). Low complexity predominate over residues 1-15 (MQQPQPQGQQQPGPG). Disordered stretches follow at residues 1-40 (MQQP…PGPC) and 174-221 (PLPA…EDDG). Residues 16–35 (QQLGGQGAAPGAGGGPGGGP) show a composition bias toward gly residues. Over residues 185 to 200 (VSSEDEDEEMPEDTED) the composition is skewed to acidic residues. The span at 212–221 (AEGKKSEDDG) shows a compositional bias: basic and acidic residues. Residues 251-415 (QATDRLMKEL…VQIHEKNGWY (165 aa)) enclose the UBC core domain. Cys351 serves as the catalytic Glycyl thioester intermediate.

This sequence belongs to the ubiquitin-conjugating enzyme family. Monomer and homodimer. Only the homodimer is linked to ubiquitin through thiolester activation. Interacts (via N-terminus) with B4GALT1 (via N-terminal cytoplasmic domain). The interaction is direct. Autoubiquitinated in vitro in the presence of NEDD4L. In terms of tissue distribution, widely expressed.

Its subcellular location is the nucleus. The protein localises to the cell projection. The protein resides in the filopodium. It localises to the cytoplasm. It is found in the cytosol. The enzyme catalyses S-ubiquitinyl-[E1 ubiquitin-activating enzyme]-L-cysteine + [E2 ubiquitin-conjugating enzyme]-L-cysteine = [E1 ubiquitin-activating enzyme]-L-cysteine + S-ubiquitinyl-[E2 ubiquitin-conjugating enzyme]-L-cysteine.. Its pathway is protein modification; protein ubiquitination. In terms of biological role, catalyzes the covalent attachment of ubiquitin to other proteins. May be involved in hormonal homeostasis in females. Involved in regulation of B4GALT1 cell surface expression, B4GALT1-mediated cell adhesion to laminin and embryoid body formation. The sequence is that of Ubiquitin-conjugating enzyme E2 Q1 (UBE2Q1) from Homo sapiens (Human).